A 666-amino-acid chain; its full sequence is tRNA 5-methylaminomethyl-2-thiouridine biosynthesis bifunctional protein MnmC (666 aa).

The tRNA (mnm(5)s(2)U34)-methyltransferase stretch occupies residues 1 to 245 (MKQYAIQPAT…KREMLCGVME (245 aa)). The interval 270–666 (IGGGIASALL…RKLLKGKAVK (397 aa)) is FAD-dependent cmnm(5)s(2)U34 oxidoreductase.

It in the N-terminal section; belongs to the methyltransferase superfamily. tRNA (mnm(5)s(2)U34)-methyltransferase family. The protein in the C-terminal section; belongs to the DAO family. Requires FAD as cofactor.

The protein localises to the cytoplasm. It carries out the reaction 5-aminomethyl-2-thiouridine(34) in tRNA + S-adenosyl-L-methionine = 5-methylaminomethyl-2-thiouridine(34) in tRNA + S-adenosyl-L-homocysteine + H(+). In terms of biological role, catalyzes the last two steps in the biosynthesis of 5-methylaminomethyl-2-thiouridine (mnm(5)s(2)U) at the wobble position (U34) in tRNA. Catalyzes the FAD-dependent demodification of cmnm(5)s(2)U34 to nm(5)s(2)U34, followed by the transfer of a methyl group from S-adenosyl-L-methionine to nm(5)s(2)U34, to form mnm(5)s(2)U34. This chain is tRNA 5-methylaminomethyl-2-thiouridine biosynthesis bifunctional protein MnmC, found in Salmonella arizonae (strain ATCC BAA-731 / CDC346-86 / RSK2980).